The chain runs to 437 residues: Trigger factor (437 aa).

The region spanning 163-248 (DDRVTVDFEG…VKKIEASHLP (86 aa)) is the PPIase FKBP-type domain.

It belongs to the FKBP-type PPIase family. Tig subfamily.

It is found in the cytoplasm. The enzyme catalyses [protein]-peptidylproline (omega=180) = [protein]-peptidylproline (omega=0). Involved in protein export. Acts as a chaperone by maintaining the newly synthesized protein in an open conformation. Functions as a peptidyl-prolyl cis-trans isomerase. The chain is Trigger factor from Variovorax paradoxus (strain S110).